A 649-amino-acid polypeptide reads, in one-letter code: MSGTINPPDGGGSGARNPPVVRQRVLAPPKAGLLKDIKSVVEETFFHDAPLRDFKGQTPAKKALLGIQAVFPIIGWAREYTLRKFRGDLIAGLTIASLCIPQDIGYAKLANVDPKYGLYSSFVPPLIYAGMGSSRDIAIGPVAVVSLLVGTLCQAVIDPKKNPEDYLRLVFTATFFAGIFQAGLGFLRLGFLIDFLSHAAVVGFMGGAAITIALQQLKGFLGIKTFTKKTDIVSVMHSVFKNAEHGWNWQTIVIGASFLTFLLVTKFIGKRNRKLFWVPAIAPLISVIISTFFVFIFRADKQGVQIVKHIDQGINPISVHKIFFSGKYFTEGIRIGGIAGMVALTEAVAIARTFAAMKDYQIDGNKEMIALGTMNVVGSMTSCYIATGSFSRSAVNFMAGVETAVSNIVMAIVVALTLEFITPLFKYTPNAILAAIIISAVLGLIDIDAAILIWRIDKLDFLACMGAFLGVIFISVEIGLLIAVVISFAKILLQVTRPRTTVLGKLPNSNVYRNTLQYPDAAQIPGILIIRVDSAIYFSNSNYVRERASRWVREEQENAKEYGMPAIRFVIIEMSPVTDIDTSGIHSIEELLKSLEKQEIQLILANPGPVVIEKLYASKFVEEIGEKNIFLTVGDAVAVCSTEVAEQQT.

The tract at residues 1–20 (MSGTINPPDGGGSGARNPPV) is disordered. At 1 to 86 (MSGTINPPDG…AREYTLRKFR (86 aa)) the chain is on the cytoplasmic side. A helical membrane pass occupies residues 87-107 (GDLIAGLTIASLCIPQDIGYA). The Extracellular portion of the chain corresponds to 108-111 (KLAN). Residues 112–132 (VDPKYGLYSSFVPPLIYAGMG) form a helical membrane-spanning segment. Topologically, residues 133–136 (SSRD) are cytoplasmic. A helical membrane pass occupies residues 137–157 (IAIGPVAVVSLLVGTLCQAVI). The Extracellular segment spans residues 158-168 (DPKKNPEDYLR). 2 helical membrane passes run 169–189 (LVFT…FLRL) and 190–210 (GFLI…GAAI). Over 211-248 (TIALQQLKGFLGIKTFTKKTDIVSVMHSVFKNAEHGWN) the chain is Extracellular. A helical membrane pass occupies residues 249 to 269 (WQTIVIGASFLTFLLVTKFIG). Over 270-275 (KRNRKL) the chain is Cytoplasmic. Residues 276–296 (FWVPAIAPLISVIISTFFVFI) form a helical membrane-spanning segment. Residues 297 to 334 (FRADKQGVQIVKHIDQGINPISVHKIFFSGKYFTEGIR) are Extracellular-facing. Residues 335-355 (IGGIAGMVALTEAVAIARTFA) form a helical membrane-spanning segment. Residues 356–367 (AMKDYQIDGNKE) lie on the Cytoplasmic side of the membrane. The helical transmembrane segment at 368–388 (MIALGTMNVVGSMTSCYIATG) threads the bilayer. Residues 389–404 (SFSRSAVNFMAGVETA) lie on the Extracellular side of the membrane. The helical transmembrane segment at 405–425 (VSNIVMAIVVALTLEFITPLF) threads the bilayer. The Cytoplasmic portion of the chain corresponds to 426–431 (KYTPNA). A helical transmembrane segment spans residues 432 to 452 (ILAAIIISAVLGLIDIDAAIL). The Extracellular portion of the chain corresponds to 453-465 (IWRIDKLDFLACM). Residues 466 to 486 (GAFLGVIFISVEIGLLIAVVI) traverse the membrane as a helical segment. At 487 to 649 (SFAKILLQVT…CSTEVAEQQT (163 aa)) the chain is on the cytoplasmic side. Positions 517-640 (QYPDAAQIPG…LTVGDAVAVC (124 aa)) constitute an STAS domain.

This sequence belongs to the SLC26A/SulP transporter (TC 2.A.53) family. Interacts with OASA1 through its STAS domain. As to expression, expressed in lateral root cap, root hairs, epidermal and cortical cells of roots.

It is found in the membrane. High-affinity H(+)/sulfate cotransporter that mediates the uptake of the environmental sulfate by plant roots under low-sulfur conditions. Plays a central role in the regulation of sulfate assimilation. This is Sulfate transporter 1.1 (SULTR1;1) from Arabidopsis thaliana (Mouse-ear cress).